The chain runs to 242 residues: Sugar fermentation stimulation protein homolog (242 aa).

This sequence belongs to the SfsA family.

This is Sugar fermentation stimulation protein homolog from Rippkaea orientalis (strain PCC 8801 / RF-1) (Cyanothece sp. (strain PCC 8801)).